A 335-amino-acid polypeptide reads, in one-letter code: NmrA-like family domain-containing oxidoreductase ptmS (335 aa).

Residues 12 to 17, 39 to 43, 60 to 61, 81 to 88, lysine 139, and 163 to 166 each bind NADP(+); these read GATGNQ, RDPNS, DG, INSDDPVF, and FLEN. Residues 161-206 form an interaction with ASS1 region; the sequence is GYFLENFLFKQGAFIMGGFPWETDAEGYLTWKVPYWGGEEQIPFLS.

It belongs to the NmrA-type oxidoreductase family.

It participates in secondary metabolite biosynthesis. Its function is as follows. NmrA-like family domain-containing oxidoreductase; part of the gene cluster that mediates the biosynthesis of the indole diterpenes penitrems. The geranylgeranyl diphosphate (GGPP) synthase ptmG catalyzes the first step in penitrem biosynthesis via conversion of farnesyl pyrophosphate and isopentyl pyrophosphate into geranylgeranyl pyrophosphate (GGPP). Condensation of indole-3-glycerol phosphate with GGPP by the prenyl transferase ptmC then forms 3-geranylgeranylindole (3-GGI). Epoxidation by the FAD-dependent monooxygenase ptmM leads to a epoxidized-GGI that is substrate of the terpene cyclase ptmB for cyclization to yield paspaline. Paspaline is subsequently converted to 13-desoxypaxilline by the cytochrome P450 monooxygenase ptmP, the latter being then converted to paxilline by the cytochrome P450 monooxygenase ptmQ. Paxilline is converted to beta-paxitriol via C-10 ketoreduction by the short-chain dehydrogenase ptmH which can be monoprenylated at the C-20 by the indole diterpene prenyltransferase ptmD. A two-step elimination (acetylation and elimination) process performed by the O-acetyltransferase ptmV and ptmI leads to the production of the prenylated form of penijanthine. The FAD-linked oxidoreductase ptmO then converts the prenylated form of penijanthine into PC-M5 which is in turn transformed into PC-M4 by the aromatic dimethylallyltransferase ptmE. Five sequential oxidative transformations performed by the cytochrome P450 monooxygenases ptmK, ptmU, ptmL, ptmN and ptmJ yield the various penitrem compounds. PtmK, ptmU and ptmM are involved in the formation of the key bicyclic ring of penitrem C via the formation of the intermediates secopenitrem D and penitrem D. PtmL catalyzes the epoxidation of penitrem D and C to yield penitrem B and F, respectively. PtmJ catalyzes the last benzylic hydroxylation to convert penitrem B to prenitrem E and penitrem F to penitrem A. The protein is NmrA-like family domain-containing oxidoreductase ptmS of Penicillium ochrochloron.